Reading from the N-terminus, the 631-residue chain is Probable basic-leucine zipper transcription factor F (631 aa).

The stretch at Lys-35–Ile-62 forms a coiled coil. Disordered regions lie at residues Gln-46–Ile-117, Leu-154–Phe-207, and Met-264–Gln-406. Low complexity-rich tracts occupy residues Asn-155–Gln-206 and Asn-271–Asn-360. Positions Asn-328–Glu-366 form a coiled coil. The bZIP domain occupies His-405–Leu-468. The basic motif stretch occupies residues Lys-407–Lys-427. A leucine-zipper region spans residues Leu-433–Leu-440. The interval Gln-546 to Arg-631 is disordered. Composition is skewed to low complexity over residues Ser-563–Ser-609 and Pro-618–Arg-631.

The protein belongs to the bZIP family.

The protein resides in the nucleus. Probable transcriptional regulator. The sequence is that of Probable basic-leucine zipper transcription factor F (bzpF) from Dictyostelium discoideum (Social amoeba).